Consider the following 150-residue polypeptide: Ubiquitin-conjugating enzyme E2 3 (150 aa).

The 147-residue stretch at Pro4–Val150 folds into the UBC core domain. Catalysis depends on Cys88, which acts as the Glycyl thioester intermediate.

Belongs to the ubiquitin-conjugating enzyme family. In terms of tissue distribution, expressed in all tissues examined. Lower levels found in leaves.

The enzyme catalyses S-ubiquitinyl-[E1 ubiquitin-activating enzyme]-L-cysteine + [E2 ubiquitin-conjugating enzyme]-L-cysteine = [E1 ubiquitin-activating enzyme]-L-cysteine + S-ubiquitinyl-[E2 ubiquitin-conjugating enzyme]-L-cysteine.. The protein operates within protein modification; protein ubiquitination. Its function is as follows. Accepts the ubiquitin from the E1 complex and catalyzes its covalent attachment to other proteins. This is Ubiquitin-conjugating enzyme E2 3 (UBC3) from Arabidopsis thaliana (Mouse-ear cress).